A 128-amino-acid chain; its full sequence is NHP2-like protein 1 (128 aa).

Positions 36-48 (RKGANEATKTLNR) are interaction with U4 snRNA and U4atac snRNA. The segment at 96–128 (SRPVIACAVTIKEGSQLKPQIQSLQQSIERLLV) is important for U4 snRNA-binding.

Belongs to the eukaryotic ribosomal protein eL8 family. As to quaternary structure, identified in the spliceosome B complex. Component of the U4/U6-U5 tri-snRNP complex. Part of the small subunit (SSU) processome, composed of more than 70 proteins and the RNA chaperone small nucleolar RNA (snoRNA) U3.

The protein localises to the nucleus. The protein resides in the nucleolus. In terms of biological role, part of the small subunit (SSU) processome, first precursor of the small eukaryotic ribosomal subunit. During the assembly of the SSU processome in the nucleolus, many ribosome biogenesis factors, an RNA chaperone and ribosomal proteins associate with the nascent pre-rRNA and work in concert to generate RNA folding, modifications, rearrangements and cleavage as well as targeted degradation of pre-ribosomal RNA by the RNA exosome. Involved in pre-mRNA splicing as component of the spliceosome. Binds to the 5'-stem-loop of U4 snRNA and thereby contributes to spliceosome assembly. The protein undergoes a conformational change upon RNA-binding. Core component of box C/D small nucleolar ribonucleoprotein (snoRNP) complexes that function in methylation of multiple sites on ribosomal RNAs (rRNAs) and messenger RNAs (mRNAs). In Xenopus tropicalis (Western clawed frog), this protein is NHP2-like protein 1.